The sequence spans 229 residues: PKHD-type hydroxylase OCAR_6723/OCA5_c13470 (229 aa).

The Fe2OG dioxygenase domain occupies 78–180; it reads HIFPPLFNRY…RVASFFWLQS (103 aa). Residues H98, D100, and H161 each coordinate Fe cation. R171 contacts 2-oxoglutarate.

Fe(2+) serves as cofactor. L-ascorbate is required as a cofactor.

The sequence is that of PKHD-type hydroxylase OCAR_6723/OCA5_c13470 from Afipia carboxidovorans (strain ATCC 49405 / DSM 1227 / KCTC 32145 / OM5) (Oligotropha carboxidovorans).